Here is a 115-residue protein sequence, read N- to C-terminus: MQSCRVQCALTLLSLALAINSISAAPTDPRLRQFLQKSLASAGKQELAKYFLAELLSEPSQTDNEALESDDLPRGAEQDEVRLELERSANSSPALAPRERKAGCKNFFWKTFTSC.

The signal sequence occupies residues 1–24; that stretch reads MQSCRVQCALTLLSLALAINSISA. Positions 25 to 99 are excised as a propeptide; that stretch reads APTDPRLRQF…NSSPALAPRE (75 aa). The interval 60-79 is disordered; sequence SQTDNEALESDDLPRGAEQD. A disulfide bond links C104 and C115.

The protein belongs to the somatostatin family.

Its subcellular location is the secreted. Its function is as follows. Somatostatin inhibits the release of somatotropin. This Pelophylax ridibundus (Marsh frog) protein is Somatostatin-1 (sst1).